The sequence spans 213 residues: uncharacterized protein (213 aa).

The signal sequence occupies residues 1-19; it reads MKKVLLLLFVLTIGLALSA. The N-palmitoyl cysteine moiety is linked to residue cysteine 20. Residue cysteine 20 is the site of S-diacylglycerol cysteine attachment. The segment at 20 to 62 is disordered; sequence CSQSSDASEKEKPKEKKSQEELEKELDKELKKGGEPKTKKDDQ. The segment covering 26–62 has biased composition (basic and acidic residues); the sequence is ASEKEKPKEKKSQEELEKELDKELKKGGEPKTKKDDQ.

It is found in the cell membrane. This is an uncharacterized protein from Bacillus subtilis (strain 168).